Reading from the N-terminus, the 235-residue chain is Aspartate/glutamate leucyltransferase (235 aa).

The protein belongs to the R-transferase family. Bpt subfamily.

The protein localises to the cytoplasm. It carries out the reaction N-terminal L-glutamyl-[protein] + L-leucyl-tRNA(Leu) = N-terminal L-leucyl-L-glutamyl-[protein] + tRNA(Leu) + H(+). The enzyme catalyses N-terminal L-aspartyl-[protein] + L-leucyl-tRNA(Leu) = N-terminal L-leucyl-L-aspartyl-[protein] + tRNA(Leu) + H(+). Functionally, functions in the N-end rule pathway of protein degradation where it conjugates Leu from its aminoacyl-tRNA to the N-termini of proteins containing an N-terminal aspartate or glutamate. The protein is Aspartate/glutamate leucyltransferase of Pseudomonas paraeruginosa (strain DSM 24068 / PA7) (Pseudomonas aeruginosa (strain PA7)).